The primary structure comprises 247 residues: tRNA (guanine-N(1)-)-methyltransferase (247 aa).

Residues glycine 115 and isoleucine 134–leucine 139 contribute to the S-adenosyl-L-methionine site.

The protein belongs to the RNA methyltransferase TrmD family. As to quaternary structure, homodimer.

It localises to the cytoplasm. The enzyme catalyses guanosine(37) in tRNA + S-adenosyl-L-methionine = N(1)-methylguanosine(37) in tRNA + S-adenosyl-L-homocysteine + H(+). In terms of biological role, specifically methylates guanosine-37 in various tRNAs. This is tRNA (guanine-N(1)-)-methyltransferase from Anaeromyxobacter sp. (strain K).